The primary structure comprises 108 residues: Nucleoid-associated protein Mpe_A2533 (108 aa).

The segment at 86–108 is disordered; that stretch reads TSEEKMGKLTAGMPLPPGMKLPF. Pro residues predominate over residues 99–108; it reads PLPPGMKLPF.

The protein belongs to the YbaB/EbfC family. In terms of assembly, homodimer.

The protein resides in the cytoplasm. Its subcellular location is the nucleoid. In terms of biological role, binds to DNA and alters its conformation. May be involved in regulation of gene expression, nucleoid organization and DNA protection. The polypeptide is Nucleoid-associated protein Mpe_A2533 (Methylibium petroleiphilum (strain ATCC BAA-1232 / LMG 22953 / PM1)).